A 271-amino-acid polypeptide reads, in one-letter code: Acetyl-coenzyme A carboxylase carboxyl transferase subunit alpha (271 aa).

Positions Met-1–Glu-247 constitute a CoA carboxyltransferase C-terminal domain.

It belongs to the AccA family. Acetyl-CoA carboxylase is a heterohexamer composed of biotin carboxyl carrier protein (AccB), biotin carboxylase (AccC) and two subunits each of ACCase subunit alpha (AccA) and ACCase subunit beta (AccD).

Its subcellular location is the cytoplasm. It carries out the reaction N(6)-carboxybiotinyl-L-lysyl-[protein] + acetyl-CoA = N(6)-biotinyl-L-lysyl-[protein] + malonyl-CoA. Its pathway is lipid metabolism; malonyl-CoA biosynthesis; malonyl-CoA from acetyl-CoA: step 1/1. Its function is as follows. Component of the acetyl coenzyme A carboxylase (ACC) complex. First, biotin carboxylase catalyzes the carboxylation of biotin on its carrier protein (BCCP) and then the CO(2) group is transferred by the carboxyltransferase to acetyl-CoA to form malonyl-CoA. In Clostridium perfringens (strain 13 / Type A), this protein is Acetyl-coenzyme A carboxylase carboxyl transferase subunit alpha.